Reading from the N-terminus, the 474-residue chain is Probable aspartate--tRNA ligase, cytoplasmic (474 aa).

Glu203 contributes to the L-aspartate binding site. Residues 225–228 (QLYK) are aspartate. Residue Arg247 participates in L-aspartate binding. ATP contacts are provided by residues 247-249 (RAE), 255-257 (RYL), and Glu397. Positions 400 and 404 each coordinate L-aspartate. Position 445-448 (445-448 (GLER)) interacts with ATP.

This sequence belongs to the class-II aminoacyl-tRNA synthetase family. Type 2 subfamily. As to quaternary structure, homodimer.

The protein localises to the cytoplasm. The enzyme catalyses tRNA(Asp) + L-aspartate + ATP = L-aspartyl-tRNA(Asp) + AMP + diphosphate. The chain is Probable aspartate--tRNA ligase, cytoplasmic from Enterocytozoon bieneusi (strain H348) (Microsporidian parasite).